The sequence spans 451 residues: Protein FAM117A (451 aa).

The segment covering 1–25 has biased composition (gly residues); that stretch reads MSGAAAGGRGGGSWGPGRGGAGGLR. Disordered regions lie at residues 1–83 and 164–183; these read MSGA…RPQP and RTKL…VQGD. 2 positions are modified to phosphoserine: Ser-29 and Ser-67. Residues 149 to 175 adopt a coiled-coil conformation; it reads TDHRKEITKLKQQLQRTKLSRSGKEKE. 2 positions are modified to phosphoserine: Ser-193 and Ser-213. The disordered stretch occupies residues 242-293; that stretch reads DGHRAPAPPQNSSCDHSLLLEPGNLTSSPSVPLASPQPPSQASREEHQGATE. A phosphoserine mark is found at Ser-318 and Ser-326. Position 353 is a phosphothreonine (Thr-353). Residues 403-451 are disordered; the sequence is SPGSPLPTASPRAPRKGPEASKASSLPSEPWQRSPPSEESVLFQSSLVV. A phosphoserine mark is found at Ser-412 and Ser-426. The span at 436-451 shows a compositional bias: polar residues; it reads SPPSEESVLFQSSLVV.

It belongs to the FAM117 family.

This chain is Protein FAM117A (Fam117a), found in Mus musculus (Mouse).